A 63-amino-acid chain; its full sequence is Cecropin-2 (63 aa).

Residues 1 to 21 (MNFNKVLVLLAVIFAVFAGQT) form the signal peptide. Positions 22–23 (EA) are excised as a propeptide. At Lys62 the chain carries Lysine amide.

It belongs to the cecropin family.

Its subcellular location is the secreted. Functionally, cecropins have lytic and antibacterial activity against several Gram-positive and Gram-negative bacteria. The chain is Cecropin-2 (CEC2) from Ceratitis capitata (Mediterranean fruit fly).